We begin with the raw amino-acid sequence, 374 residues long: DNA replication and repair protein RecF (374 aa).

Position 34–41 (34–41 (GDNGAGKT)) interacts with ATP.

It belongs to the RecF family.

It localises to the cytoplasm. Functionally, the RecF protein is involved in DNA metabolism; it is required for DNA replication and normal SOS inducibility. RecF binds preferentially to single-stranded, linear DNA. It also seems to bind ATP. The polypeptide is DNA replication and repair protein RecF (Rhizobium etli (strain ATCC 51251 / DSM 11541 / JCM 21823 / NBRC 15573 / CFN 42)).